Consider the following 61-residue polypeptide: Conotoxin Vn5.3 (61 aa).

Residues Met-1 to Gly-19 form the signal peptide. Residues Val-20–Arg-50 constitute a propeptide that is removed on maturation.

It belongs to the conotoxin T superfamily. In terms of processing, contains 2 disulfide bonds that can be either 'C1-C3, C2-C4' or 'C1-C4, C2-C3', since these disulfide connectivities have been observed for conotoxins with cysteine framework V (for examples, see AC P0DQQ7 and AC P81755). As to expression, expressed by the venom duct.

The protein resides in the secreted. This Conus ventricosus (Mediterranean cone) protein is Conotoxin Vn5.3.